The following is a 98-amino-acid chain: NADH-ubiquinone oxidoreductase chain 4L (98 aa).

3 helical membrane-spanning segments follow: residues 1–21 (MSPL…GLAF), 26–46 (LISA…PLSI), and 56–76 (FALV…TGLA).

This sequence belongs to the complex I subunit 4L family. As to quaternary structure, core subunit of respiratory chain NADH dehydrogenase (Complex I) which is composed of 45 different subunits.

It is found in the mitochondrion inner membrane. The catalysed reaction is a ubiquinone + NADH + 5 H(+)(in) = a ubiquinol + NAD(+) + 4 H(+)(out). Its function is as follows. Core subunit of the mitochondrial membrane respiratory chain NADH dehydrogenase (Complex I) which catalyzes electron transfer from NADH through the respiratory chain, using ubiquinone as an electron acceptor. Part of the enzyme membrane arm which is embedded in the lipid bilayer and involved in proton translocation. The sequence is that of NADH-ubiquinone oxidoreductase chain 4L (MT-ND4L) from Gallus gallus (Chicken).